The sequence spans 818 residues: MATEEIDMSYWDVSWGEFNEDKNSSIFCESHPHIVNSHGIWEVMTFKRGMNFWEYPLPNLEILIFSTFFIWRLLDISFNKIGLRVPRFTYMMIAGIILGQTCHFSNKSWIHDIFFPDDNRPKVAETLGAFGFVLYWFLKGVTMDAELPFRTEKRSSVIGFITVIIPLICGSLTFRYRERRGDSSILRMEYRLIIFLQSISAFTSIDTLLKDLQIKHSEFGRIALSGAMVTDMLAFGVTFFNAIYYEKLYGFMQTVGFCLFVVVMICVVRPAMYWVIKQTPEGRPVKDFYLYSIFGIAFACFTFFNKVIHLFGPAGSFVFGLTVPNGYPLGTTLIQKFESFNLGSILPLFGSLTMMQVDLLRLFKESGDLIRMEGQIYEVISFILLVNTTKFVVTTITAYAFKMPLRDSFALALVLSNKGIFELAYYTYAVELKLIRPEVFTILAAYTLLNSIFIPMLLELVHDPTKRFRCYRKRNLGILKDGAALQCLMCVYRPDHITSMTDLLETFSPSQDSPMACNILHLVELVGQANPMFISHQLQKPEPGSTSLSDNVIISFRGFQRQFFEYTSLDIFTSVSVSQHMHEDICWLALSRSLSLIVLPFHRTWSVDRSTVISNDDNLRMLNVNVLRRAPCSVGIFVYRKPIVESHMAKSHSKICLIFNGGKDDREALAITNRMRLTEKRTRLTIIRFIPKSSEMDNDEWEQQQSINLKESVTSIVGSNIKENDAKVTYIDKAVSDGSETSRILRAMANDYDLFIVGSGSGIGTEATSGISEWTEFNELGPIGDLLASHEYPSSASVLVVQKQVYIHHTKSQRRKSF.

13 consecutive transmembrane segments (helical) span residues 51–71, 88–110, 123–143, 156–176, 192–212, 222–242, 248–268, 288–308, 310–330, 340–360, 376–396, 409–429, and 438–458; these read NFWEYPLPNLEILIFSTFFIW, FTYMMIAGIILGQTCHFSNKSWI, VAETLGAFGFVLYWFLKGVTM, SVIGFITVIIPLICGSLTFRY, LIIFLQSISAFTSIDTLLKDL, IALSGAMVTDMLAFGVTFFNA, LYGFMQTVGFCLFVVVMICVV, FYLYSIFGIAFACFTFFNKVI, LFGPAGSFVFGLTVPNGYPLG, FNLGSILPLFGSLTMMQVDLL, IYEVISFILLVNTTKFVVTTI, FALALVLSNKGIFELAYYTYA, and EVFTILAAYTLLNSIFIPMLL.

This sequence belongs to the monovalent cation:proton antiporter 2 (CPA2) transporter (TC 2.A.37) family. CHX (TC 2.A.37.4) subfamily. In terms of tissue distribution, preferentially expressed in pollen.

The protein localises to the membrane. Functionally, may operate as a cation/H(+) antiporter. In Arabidopsis thaliana (Mouse-ear cress), this protein is Cation/H(+) antiporter 6A (CHX6a).